A 74-amino-acid chain; its full sequence is MDIVSLKFIGIGFMAIGMYGAALGVSNIFSSLLSAIARNPSAAENLQRMALIGAGLAEAMGLFSFVIAMLLIFS.

The next 2 helical transmembrane spans lie at 8–28 (FIGI…VSNI) and 52–72 (IGAG…MLLI).

The protein belongs to the ATPase C chain family. As to quaternary structure, F-type ATPases have 2 components, F(1) - the catalytic core - and F(0) - the membrane proton channel. F(1) has five subunits: alpha(3), beta(3), gamma(1), delta(1), epsilon(1). F(0) has three main subunits: a(1), b(2) and c(10-14). The alpha and beta chains form an alternating ring which encloses part of the gamma chain. F(1) is attached to F(0) by a central stalk formed by the gamma and epsilon chains, while a peripheral stalk is formed by the delta and b chains.

Its subcellular location is the cell inner membrane. Its function is as follows. F(1)F(0) ATP synthase produces ATP from ADP in the presence of a proton or sodium gradient. F-type ATPases consist of two structural domains, F(1) containing the extramembraneous catalytic core and F(0) containing the membrane proton channel, linked together by a central stalk and a peripheral stalk. During catalysis, ATP synthesis in the catalytic domain of F(1) is coupled via a rotary mechanism of the central stalk subunits to proton translocation. In terms of biological role, key component of the F(0) channel; it plays a direct role in translocation across the membrane. A homomeric c-ring of between 10-14 subunits forms the central stalk rotor element with the F(1) delta and epsilon subunits. In Rickettsia prowazekii (strain Madrid E), this protein is ATP synthase subunit c.